The sequence spans 372 residues: Tribbles homolog 1 (372 aa).

Disordered stretches follow at residues 1-26 (MRVG…FPAA) and 49-85 (RLSE…CVSS). Positions 59–74 (YLSPPGSPCSPQPPPS) are enriched in pro residues. The Protein kinase domain occupies 91–338 (IADYLLLPLA…APQILLHPWF (248 aa)). The COP1-binding signature appears at 355–360 (DQIVPE).

This sequence belongs to the protein kinase superfamily. CAMK Ser/Thr protein kinase family. Tribbles subfamily. As to quaternary structure, monomer. Interacts (via protein kinase domain) with CEBPA. Interacts with COP1.

In terms of biological role, adapter protein involved in protein degradation by interacting with COP1 ubiquitin ligase. Promotes CEBPA degradation and inhibits its function. Controls macrophage, eosinophil and neutrophil differentiation via the COP1-binding domain. Regulates myeloid cell differentiation by altering the expression of CEBPA in a COP1-dependent manner. Interacts with MAPK kinases and regulates activation of MAP kinases, but has no kinase activity. The sequence is that of Tribbles homolog 1 from Mus musculus (Mouse).